Here is a 138-residue protein sequence, read N- to C-terminus: Gas vesicle protein A (138 aa).

The tract at residues 74-138 (EAGPRKDPGL…STSRKKEEQE (65 aa)) is disordered. A compositionally biased stretch (low complexity) spans 116 to 129 (GSSSGSSSGSSSRS).

This sequence belongs to the gas vesicle GvpA family. As to quaternary structure, the gas vesicle shell is 2 nm thick and consists of a single layer of this protein. It forms helical ribs nearly perpendicular to the long axis of the vesicle.

The protein resides in the gas vesicle shell. In terms of biological role, gas vesicles are hollow, gas filled proteinaceous nanostructures found in some microorganisms. During planktonic growth they allow positioning of the organism at a favorable depth for light or nutrient acquisition. GvpA forms the protein shell. It is not clear what function gas vesicles perform in soil bacteria. This is Gas vesicle protein A from Streptomyces sp. (strain CB03234).